A 604-amino-acid chain; its full sequence is Elongation factor 4 (604 aa).

In terms of domain architecture, tr-type G spans 7–189 (KRIRNFCIIA…SVVDRVPPPA (183 aa)). GTP is bound by residues 19–24 (DHGKST) and 136–139 (NKID).

The protein belongs to the TRAFAC class translation factor GTPase superfamily. Classic translation factor GTPase family. LepA subfamily.

Its subcellular location is the cell inner membrane. The enzyme catalyses GTP + H2O = GDP + phosphate + H(+). Its function is as follows. Required for accurate and efficient protein synthesis under certain stress conditions. May act as a fidelity factor of the translation reaction, by catalyzing a one-codon backward translocation of tRNAs on improperly translocated ribosomes. Back-translocation proceeds from a post-translocation (POST) complex to a pre-translocation (PRE) complex, thus giving elongation factor G a second chance to translocate the tRNAs correctly. Binds to ribosomes in a GTP-dependent manner. The polypeptide is Elongation factor 4 (Synechococcus sp. (strain CC9311)).